We begin with the raw amino-acid sequence, 151 residues long: Large ribosomal subunit protein bL9 (151 aa).

This sequence belongs to the bacterial ribosomal protein bL9 family.

In terms of biological role, binds to the 23S rRNA. This chain is Large ribosomal subunit protein bL9, found in Chloroherpeton thalassium (strain ATCC 35110 / GB-78).